The primary structure comprises 145 residues: Large ribosomal subunit protein bL19 (145 aa).

A compositionally biased stretch (basic and acidic residues) spans 112–130; the sequence is GKSARIKERRPAKAVEKTS. A disordered region spans residues 112–145; the sequence is GKSARIKERRPAKAVEKTSKPASAKKPAAKANKK.

Belongs to the bacterial ribosomal protein bL19 family.

This protein is located at the 30S-50S ribosomal subunit interface and may play a role in the structure and function of the aminoacyl-tRNA binding site. The chain is Large ribosomal subunit protein bL19 from Malacoplasma penetrans (strain HF-2) (Mycoplasma penetrans).